The following is a 375-amino-acid chain: Ornithine transcarbamylase, chloroplastic (375 aa).

The N-terminal 53 residues, 1–53, are a transit peptide targeting the chloroplast; the sequence is MAAAMASHVSTARSPALSFSSSSSSFFPGTTLRRFSAVSLPSPALPRLRVSCQ. Alanine 54 bears the N-acetylalanine mark. Carbamoyl phosphate contacts are provided by residues 123–126, arginine 174, histidine 201, and glutamine 204; that span reads SMRT. Positions 232, 293, 297, and 298 each coordinate L-ornithine. The active-site Proton acceptor is the cysteine 333. Carbamoyl phosphate is bound by residues 333–334 and arginine 361; that span reads CL.

It belongs to the aspartate/ornithine carbamoyltransferase superfamily. OTCase family.

It is found in the plastid. Its subcellular location is the chloroplast. It carries out the reaction carbamoyl phosphate + L-ornithine = L-citrulline + phosphate + H(+). The protein is Ornithine transcarbamylase, chloroplastic (OTC) of Arabidopsis thaliana (Mouse-ear cress).